A 329-amino-acid chain; its full sequence is GTP 3',8-cyclase (329 aa).

Positions 8-229 (AFARTFYYLR…AGWQRRLPGR (222 aa)) constitute a Radical SAM core domain. Arg17 lines the GTP pocket. [4Fe-4S] cluster-binding residues include Cys24 and Cys28. Residue Tyr30 participates in S-adenosyl-L-methionine binding. Residue Cys31 participates in [4Fe-4S] cluster binding. Arg68 lines the GTP pocket. Gly72 serves as a coordination point for S-adenosyl-L-methionine. Thr99 is a binding site for GTP. Residue Ser123 coordinates S-adenosyl-L-methionine. Lys160 contributes to the GTP binding site. Met194 serves as a coordination point for S-adenosyl-L-methionine. Residues Cys257 and Cys260 each contribute to the [4Fe-4S] cluster site. 262–264 (RLR) contacts GTP. Cys274 contributes to the [4Fe-4S] cluster binding site.

It belongs to the radical SAM superfamily. MoaA family. In terms of assembly, monomer and homodimer. [4Fe-4S] cluster serves as cofactor.

The catalysed reaction is GTP + AH2 + S-adenosyl-L-methionine = (8S)-3',8-cyclo-7,8-dihydroguanosine 5'-triphosphate + 5'-deoxyadenosine + L-methionine + A + H(+). It functions in the pathway cofactor biosynthesis; molybdopterin biosynthesis. Its function is as follows. Catalyzes the cyclization of GTP to (8S)-3',8-cyclo-7,8-dihydroguanosine 5'-triphosphate. This chain is GTP 3',8-cyclase, found in Edwardsiella ictaluri (strain 93-146).